Here is a 248-residue protein sequence, read N- to C-terminus: tRNA (guanine-N(1)-)-methyltransferase (248 aa).

S-adenosyl-L-methionine is bound by residues Gly113 and 133-138 (IGDFVL).

The protein belongs to the RNA methyltransferase TrmD family. In terms of assembly, homodimer.

Its subcellular location is the cytoplasm. The catalysed reaction is guanosine(37) in tRNA + S-adenosyl-L-methionine = N(1)-methylguanosine(37) in tRNA + S-adenosyl-L-homocysteine + H(+). Specifically methylates guanosine-37 in various tRNAs. This is tRNA (guanine-N(1)-)-methyltransferase from Dehalococcoides mccartyi (strain ATCC BAA-2266 / KCTC 15142 / 195) (Dehalococcoides ethenogenes (strain 195)).